A 330-amino-acid polypeptide reads, in one-letter code: MKTILNKLINHEVLSKEEAKNVLINISSGQYNPSQISAFLTVFMMRSITIDELSGFREALLELCIRIDLSAYNTIDLCGTGGDGKDTFNISTLASFVAAGAGIKVAKHGNYGVSSISGSSNVMEKMGIKFSNDPSFLEKCIDQAGICVLHAPLFHPAMKNVGPIRKELAVKTFFNMLGPMVNPSFPQNQLVGVFNLELARMYAYLYQNTNVNFTILHSLDGYDEISLTGPTKIITSHMEGMIKPEDFGIRLLSQTEIEGGKTIEESAEIFTNIISGKGNEAQNNVVCANAAMAIATVTKCSPQEGFELAKESLFSGKGLKALQKLQELSL.

5-phospho-alpha-D-ribose 1-diphosphate is bound by residues Gly-79, 82–83, Thr-87, 89–92, 107–115, and Ser-119; these read GD, NIST, and KHGNYGVSS. Gly-79 provides a ligand contact to anthranilate. Residue Ser-91 coordinates Mg(2+). Asn-110 contributes to the anthranilate binding site. Arg-165 is a binding site for anthranilate. Asp-223 and Glu-224 together coordinate Mg(2+).

The protein belongs to the anthranilate phosphoribosyltransferase family. Homodimer. Mg(2+) is required as a cofactor.

The enzyme catalyses N-(5-phospho-beta-D-ribosyl)anthranilate + diphosphate = 5-phospho-alpha-D-ribose 1-diphosphate + anthranilate. The protein operates within amino-acid biosynthesis; L-tryptophan biosynthesis; L-tryptophan from chorismate: step 2/5. Its function is as follows. Catalyzes the transfer of the phosphoribosyl group of 5-phosphorylribose-1-pyrophosphate (PRPP) to anthranilate to yield N-(5'-phosphoribosyl)-anthranilate (PRA). The chain is Anthranilate phosphoribosyltransferase from Flavobacterium johnsoniae (strain ATCC 17061 / DSM 2064 / JCM 8514 / BCRC 14874 / CCUG 350202 / NBRC 14942 / NCIMB 11054 / UW101) (Cytophaga johnsonae).